Reading from the N-terminus, the 297-residue chain is Ribosomal protein L11 methyltransferase (297 aa).

Positions 139, 164, 186, and 233 each coordinate S-adenosyl-L-methionine.

The protein belongs to the methyltransferase superfamily. PrmA family.

The protein localises to the cytoplasm. It carries out the reaction L-lysyl-[protein] + 3 S-adenosyl-L-methionine = N(6),N(6),N(6)-trimethyl-L-lysyl-[protein] + 3 S-adenosyl-L-homocysteine + 3 H(+). Its function is as follows. Methylates ribosomal protein L11. In Trichodesmium erythraeum (strain IMS101), this protein is Ribosomal protein L11 methyltransferase.